We begin with the raw amino-acid sequence, 332 residues long: Glycerol-3-phosphate dehydrogenase [NAD(P)+] (332 aa).

NADPH-binding residues include tryptophan 13, lysine 34, and lysine 108. Sn-glycerol 3-phosphate-binding residues include lysine 108, glycine 136, and serine 138. Alanine 140 provides a ligand contact to NADPH. Lysine 191, aspartate 244, serine 254, arginine 255, and asparagine 256 together coordinate sn-glycerol 3-phosphate. Lysine 191 serves as the catalytic Proton acceptor. NADPH is bound at residue arginine 255. NADPH-binding residues include valine 279 and glutamate 281.

It belongs to the NAD-dependent glycerol-3-phosphate dehydrogenase family.

Its subcellular location is the cytoplasm. The enzyme catalyses sn-glycerol 3-phosphate + NAD(+) = dihydroxyacetone phosphate + NADH + H(+). It catalyses the reaction sn-glycerol 3-phosphate + NADP(+) = dihydroxyacetone phosphate + NADPH + H(+). Its pathway is membrane lipid metabolism; glycerophospholipid metabolism. In terms of biological role, catalyzes the reduction of the glycolytic intermediate dihydroxyacetone phosphate (DHAP) to sn-glycerol 3-phosphate (G3P), the key precursor for phospholipid synthesis. This Francisella philomiragia subsp. philomiragia (strain ATCC 25017 / CCUG 19701 / FSC 153 / O#319-036) protein is Glycerol-3-phosphate dehydrogenase [NAD(P)+].